Consider the following 297-residue polypeptide: Phosphatidylserine decarboxylase proenzyme (297 aa).

Catalysis depends on charge relay system; for autoendoproteolytic cleavage activity residues Asp-92, His-149, and Ser-254. The active-site Schiff-base intermediate with substrate; via pyruvic acid; for decarboxylase activity is Ser-254. Position 254 is a pyruvic acid (Ser); by autocatalysis (Ser-254).

It belongs to the phosphatidylserine decarboxylase family. PSD-B subfamily. Prokaryotic type I sub-subfamily. As to quaternary structure, heterodimer of a large membrane-associated beta subunit and a small pyruvoyl-containing alpha subunit. Requires pyruvate as cofactor. In terms of processing, is synthesized initially as an inactive proenzyme. Formation of the active enzyme involves a self-maturation process in which the active site pyruvoyl group is generated from an internal serine residue via an autocatalytic post-translational modification. Two non-identical subunits are generated from the proenzyme in this reaction, and the pyruvate is formed at the N-terminus of the alpha chain, which is derived from the carboxyl end of the proenzyme. The autoendoproteolytic cleavage occurs by a canonical serine protease mechanism, in which the side chain hydroxyl group of the serine supplies its oxygen atom to form the C-terminus of the beta chain, while the remainder of the serine residue undergoes an oxidative deamination to produce ammonia and the pyruvoyl prosthetic group on the alpha chain. During this reaction, the Ser that is part of the protease active site of the proenzyme becomes the pyruvoyl prosthetic group, which constitutes an essential element of the active site of the mature decarboxylase.

It is found in the cell membrane. It catalyses the reaction a 1,2-diacyl-sn-glycero-3-phospho-L-serine + H(+) = a 1,2-diacyl-sn-glycero-3-phosphoethanolamine + CO2. It functions in the pathway phospholipid metabolism; phosphatidylethanolamine biosynthesis; phosphatidylethanolamine from CDP-diacylglycerol: step 2/2. Catalyzes the formation of phosphatidylethanolamine (PtdEtn) from phosphatidylserine (PtdSer). This is Phosphatidylserine decarboxylase proenzyme from Bordetella bronchiseptica (strain ATCC BAA-588 / NCTC 13252 / RB50) (Alcaligenes bronchisepticus).